Here is a 118-residue protein sequence, read N- to C-terminus: UPF0382 membrane protein C1782.12c (118 aa).

The N-terminal stretch at 1 to 18 is a signal peptide; that stretch reads MTIWNVAALTGLLSVGLG. The Lumenal segment spans residues 19–40; that stretch reads AYGSHGLQKRVQDPHLLKSWST. A helical membrane pass occupies residues 41-61; it reads ACTYLMFHSLATMAVSLHPVY. Residues 62-67 are Cytoplasmic-facing; it reads GKSRWT. Residues 68–88 traverse the membrane as a helical segment; it reads GPLLITGSCLFSGTIYGLCLL. The Lumenal segment spans residues 89-96; it reads PKGHSLRR. A helical membrane pass occupies residues 97–117; sequence ILGPLTPIGGLVMLTGWATML. Valine 118 is a topological domain (cytoplasmic).

The protein belongs to the UPF0382 family.

It is found in the endoplasmic reticulum membrane. The protein is UPF0382 membrane protein C1782.12c of Schizosaccharomyces pombe (strain 972 / ATCC 24843) (Fission yeast).